Reading from the N-terminus, the 157-residue chain is Small ribosomal subunit protein uS7 (157 aa).

This sequence belongs to the universal ribosomal protein uS7 family. Part of the 30S ribosomal subunit. Contacts proteins S9 and S11.

One of the primary rRNA binding proteins, it binds directly to 16S rRNA where it nucleates assembly of the head domain of the 30S subunit. Is located at the subunit interface close to the decoding center, probably blocks exit of the E-site tRNA. This Opitutus terrae (strain DSM 11246 / JCM 15787 / PB90-1) protein is Small ribosomal subunit protein uS7.